Consider the following 293-residue polypeptide: Pyridoxal 5'-phosphate synthase subunit PdxS (293 aa).

A D-ribose 5-phosphate-binding site is contributed by aspartate 23. Lysine 80 (schiff-base intermediate with D-ribose 5-phosphate) is an active-site residue. Residue glycine 152 coordinates D-ribose 5-phosphate. A D-glyceraldehyde 3-phosphate-binding site is contributed by arginine 164. Residues glycine 213 and 234–235 contribute to the D-ribose 5-phosphate site; that span reads GS.

This sequence belongs to the PdxS/SNZ family. In the presence of PdxT, forms a dodecamer of heterodimers.

The enzyme catalyses aldehydo-D-ribose 5-phosphate + D-glyceraldehyde 3-phosphate + L-glutamine = pyridoxal 5'-phosphate + L-glutamate + phosphate + 3 H2O + H(+). It participates in cofactor biosynthesis; pyridoxal 5'-phosphate biosynthesis. Its function is as follows. Catalyzes the formation of pyridoxal 5'-phosphate from ribose 5-phosphate (RBP), glyceraldehyde 3-phosphate (G3P) and ammonia. The ammonia is provided by the PdxT subunit. Can also use ribulose 5-phosphate and dihydroxyacetone phosphate as substrates, resulting from enzyme-catalyzed isomerization of RBP and G3P, respectively. The sequence is that of Pyridoxal 5'-phosphate synthase subunit PdxS from Dehalococcoides mccartyi (strain ATCC BAA-2100 / JCM 16839 / KCTC 5957 / BAV1).